We begin with the raw amino-acid sequence, 456 residues long: GTPase Der (456 aa).

2 EngA-type G domains span residues 4 to 169 and 178 to 353; these read PVVA…PSKD and VQLA…DQSR. GTP contacts are provided by residues 10 to 17, 57 to 61, 120 to 123, 184 to 191, 231 to 235, and 296 to 299; these read GRPNVGKS, DTGGL, NKCE, DTAGI, and NKWD. A KH-like domain is found at 354 to 439; that stretch reads RRVTTSVVNE…PIKLFWRGKQ (86 aa).

The protein belongs to the TRAFAC class TrmE-Era-EngA-EngB-Septin-like GTPase superfamily. EngA (Der) GTPase family. As to quaternary structure, associates with the 50S ribosomal subunit.

Its function is as follows. GTPase that plays an essential role in the late steps of ribosome biogenesis. This is GTPase Der from Prochlorococcus marinus (strain NATL1A).